A 335-amino-acid polypeptide reads, in one-letter code: Tetraacyldisaccharide 4'-kinase (335 aa).

58–65 contributes to the ATP binding site; the sequence is TVGGNGKT.

This sequence belongs to the LpxK family.

The catalysed reaction is a lipid A disaccharide + ATP = a lipid IVA + ADP + H(+). Its pathway is glycolipid biosynthesis; lipid IV(A) biosynthesis; lipid IV(A) from (3R)-3-hydroxytetradecanoyl-[acyl-carrier-protein] and UDP-N-acetyl-alpha-D-glucosamine: step 6/6. In terms of biological role, transfers the gamma-phosphate of ATP to the 4'-position of a tetraacyldisaccharide 1-phosphate intermediate (termed DS-1-P) to form tetraacyldisaccharide 1,4'-bis-phosphate (lipid IVA). The polypeptide is Tetraacyldisaccharide 4'-kinase (Dichelobacter nodosus (strain VCS1703A)).